The chain runs to 83 residues: Disintegrin bitistatin (83 aa).

Positions 2–83 (PPVCGNKILE…GKSSDCPWNH (82 aa)) constitute a Disintegrin domain. Disulfide bonds link Cys-5–Cys-24, Cys-5–Cys-34, Cys-16–Cys-29, Cys-16–Cys-34, Cys-18–Cys-24, Cys-18–Cys-29, Cys-28–Cys-51, Cys-42–Cys-48, Cys-47–Cys-72, and Cys-60–Cys-79. Positions 64-66 (RGD) match the Cell attachment site motif.

Belongs to the venom metalloproteinase (M12B) family. P-II subfamily. P-IIa sub-subfamily. As to quaternary structure, monomer. Exists in 3 forms in the venom. The forms A, B, and C are present at 53%, 32% and 15%. The forms A and B differ by their disulfide bond pattern in the N-terminal part. No information is known about form C. Expressed by the venom gland.

Its subcellular location is the secreted. Inhibits fibrinogen interaction with platelets. Acts by binding to alpha-IIb/beta-3 (ITGA2B/ITGB3) on the platelet surface and inhibits aggregation induced by ADP, thrombin, platelet-activating factor and collagen. The polypeptide is Disintegrin bitistatin (Bitis arietans (African puff adder)).